The sequence spans 182 residues: Large ribosomal subunit protein uL6 (182 aa).

It belongs to the universal ribosomal protein uL6 family. Part of the 50S ribosomal subunit.

In terms of biological role, this protein binds to the 23S rRNA, and is important in its secondary structure. It is located near the subunit interface in the base of the L7/L12 stalk, and near the tRNA binding site of the peptidyltransferase center. In Methanococcus vannielii, this protein is Large ribosomal subunit protein uL6.